The primary structure comprises 445 residues: Ubiquitin carboxyl-terminal hydrolase MINDY-3 (445 aa).

Residue Cys51 is the Nucleophile of the active site. At Ser125 the chain carries Phosphoserine. His287 functions as the Proton acceptor in the catalytic mechanism.

It belongs to the MINDY deubiquitinase family. FAM188 subfamily. In terms of assembly, interacts with COPS5.

Its subcellular location is the nucleus. The enzyme catalyses Thiol-dependent hydrolysis of ester, thioester, amide, peptide and isopeptide bonds formed by the C-terminal Gly of ubiquitin (a 76-residue protein attached to proteins as an intracellular targeting signal).. In terms of biological role, hydrolase that can remove 'Lys-48'-linked conjugated ubiquitin from proteins. The chain is Ubiquitin carboxyl-terminal hydrolase MINDY-3 (MINDY3) from Bos taurus (Bovine).